A 216-amino-acid chain; its full sequence is ATP synthase subunit 5, mitochondrial (216 aa).

Belongs to the ATPase delta chain family. In terms of assembly, F-type ATPases have 2 components, CF(1) - the catalytic core - and CF(0) - the membrane proton channel. CF(1) has five subunits: alpha(3), beta(3), gamma(1), delta(1), epsilon(1). CF(0) has three main subunits: a, b and c.

Its subcellular location is the mitochondrion. It is found in the mitochondrion inner membrane. Mitochondrial membrane ATP synthase (F(1)F(0) ATP synthase or Complex V) produces ATP from ADP in the presence of a proton gradient across the membrane which is generated by electron transport complexes of the respiratory chain. F-type ATPases consist of two structural domains, F(1) - containing the extramembraneous catalytic core and F(0) - containing the membrane proton channel, linked together by a central stalk and a peripheral stalk. During catalysis, ATP synthesis in the catalytic domain of F(1) is coupled via a rotary mechanism of the central stalk subunits to proton translocation. Part of the complex F(0) domain and the peripheric stalk, which acts as a stator to hold the catalytic alpha(3)beta(3) subcomplex and subunit a/ATP6 static relative to the rotary elements. In Schizosaccharomyces pombe (strain 972 / ATCC 24843) (Fission yeast), this protein is ATP synthase subunit 5, mitochondrial (atp5).